The chain runs to 172 residues: Large ribosomal subunit protein bL21m (172 aa).

The transit peptide at 1 to 20 (MIRNIGSNLMKSSSSILLRN) directs the protein to the mitochondrion.

Belongs to the bacterial ribosomal protein bL21 family.

It localises to the mitochondrion. This is Large ribosomal subunit protein bL21m (mrpl21) from Dictyostelium discoideum (Social amoeba).